Here is a 356-residue protein sequence, read N- to C-terminus: S-adenosylmethionine:tRNA ribosyltransferase-isomerase (356 aa).

The protein belongs to the QueA family. In terms of assembly, monomer.

The protein localises to the cytoplasm. The enzyme catalyses 7-aminomethyl-7-carbaguanosine(34) in tRNA + S-adenosyl-L-methionine = epoxyqueuosine(34) in tRNA + adenine + L-methionine + 2 H(+). The protein operates within tRNA modification; tRNA-queuosine biosynthesis. Its function is as follows. Transfers and isomerizes the ribose moiety from AdoMet to the 7-aminomethyl group of 7-deazaguanine (preQ1-tRNA) to give epoxyqueuosine (oQ-tRNA). The chain is S-adenosylmethionine:tRNA ribosyltransferase-isomerase from Xanthomonas campestris pv. campestris (strain 8004).